The primary structure comprises 52 residues: UPF0181 protein HD_1137 (52 aa).

It belongs to the UPF0181 family.

In Haemophilus ducreyi (strain 35000HP / ATCC 700724), this protein is UPF0181 protein HD_1137.